Consider the following 801-residue polypeptide: Probable inorganic carbon transporter subunit DabA (801 aa).

Positions 330, 332, 489, and 504 each coordinate Zn(2+).

The protein belongs to the inorganic carbon transporter (TC 9.A.2) DabA family. In terms of assembly, forms a complex with DabB. Zn(2+) is required as a cofactor.

Its subcellular location is the cell inner membrane. Part of an energy-coupled inorganic carbon pump. The sequence is that of Probable inorganic carbon transporter subunit DabA from Jannaschia sp. (strain CCS1).